A 2473-amino-acid polypeptide reads, in one-letter code: Neurogenic locus notch homolog protein 2 (2473 aa).

An N-terminal signal peptide occupies residues 1–25 (MPALRPAALRALLWLWLCGAGPAHA). EGF-like domains follow at residues 26–63 (LQCR…EYCQ), 64–102 (HRDP…EDCQ), 105–143 (TSHP…KQCQ), and 144–180 (WTDA…QKCE). At 26 to 1679 (LQCRGGQEPC…SELESPRNAQ (1654 aa)) the chain is on the extracellular side. Disulfide bonds link Cys-28–Cys-41, Cys-35–Cys-51, Cys-53–Cys-62, Cys-68–Cys-79, Cys-73–Cys-90, Cys-92–Cys-101, Cys-109–Cys-121, Cys-115–Cys-131, Cys-133–Cys-142, Cys-148–Cys-159, Cys-153–Cys-168, Cys-170–Cys-179, Cys-186–Cys-198, Cys-192–Cys-207, Cys-209–Cys-218, Cys-230–Cys-246, Cys-248–Cys-257, Cys-264–Cys-275, Cys-269–Cys-284, Cys-286–Cys-295, Cys-302–Cys-315, Cys-309–Cys-324, Cys-326–Cys-335, Cys-342–Cys-353, Cys-347–Cys-362, Cys-364–Cys-373, Cys-379–Cys-390, Cys-384–Cys-401, Cys-403–Cys-412, Cys-419–Cys-433, Cys-427–Cys-442, Cys-444–Cys-453, Cys-460–Cys-471, Cys-465–Cys-480, Cys-482–Cys-491, Cys-498–Cys-509, Cys-503–Cys-518, Cys-520–Cys-529, Cys-536–Cys-547, Cys-541–Cys-556, Cys-558–Cys-567, Cys-574–Cys-584, Cys-579–Cys-593, Cys-595–Cys-604, Cys-611–Cys-622, Cys-616–Cys-631, Cys-633–Cys-642, Cys-649–Cys-659, Cys-654–Cys-668, Cys-670–Cys-679, Cys-686–Cys-697, Cys-691–Cys-706, Cys-708–Cys-717, Cys-724–Cys-734, Cys-729–Cys-743, Cys-745–Cys-754, Cys-761–Cys-772, Cys-766–Cys-781, Cys-783–Cys-792, Cys-799–Cys-810, Cys-804–Cys-819, Cys-821–Cys-830, Cys-837–Cys-848, Cys-842–Cys-859, Cys-861–Cys-870, Cys-877–Cys-888, Cys-882–Cys-897, Cys-899–Cys-908, Cys-915–Cys-926, Cys-920–Cys-935, Cys-937–Cys-946, Cys-953–Cys-964, Cys-958–Cys-973, Cys-975–Cys-984, Cys-991–Cys-1002, Cys-996–Cys-1011, Cys-1013–Cys-1022, Cys-1029–Cys-1040, Cys-1034–Cys-1049, Cys-1051–Cys-1060, Cys-1067–Cys-1078, Cys-1072–Cys-1087, and Cys-1089–Cys-1098. Asn-46 carries N-linked (GlcNAc...) asparagine glycosylation. Residue Asn-155 is glycosylated (N-linked (GlcNAc...) asparagine). The region spanning 182–219 (DINECDIPGRCQHGGTCLNLPGSYRCQCPQGFTGQHCD) is the EGF-like 5; calcium-binding domain. An EGF-like 6; incomplete domain is found at 221–258 (PYVPCAPSPCVNGGTCRQTGDFTFECNCLPGFEGSTCE). Positions 260 to 296 (NIDDCPNHKCQNGGVCVDGVNTYNCRCPPQWTGQFCT) constitute an EGF-like 7; calcium-binding domain. An EGF-like 8; calcium-binding domain is found at 298-336 (DVDECLLQPNACQNGGTCTNRNGGYGCVCVNGWSGDDCS). Residues 338 to 374 (NIDDCAYASCTPGSTCIDRVASFSCLCPEGKAGLLCH) enclose the EGF-like 9; calcium-binding domain. The region spanning 375–413 (LDDACISNPCHKGALCDTNPLNGQYICTCPQGYKGADCT) is the EGF-like 10 domain. In terms of domain architecture, EGF-like 11; calcium-binding spans 415–454 (DVDECAMANSNPCEHAGKCVNTDGAFHCECLKGYAGPRCE). In terms of domain architecture, EGF-like 12; calcium-binding spans 456 to 492 (DINECHSDPCQNDATCLDKIGGFTCLCMPGFKGVHCE). The 37-residue stretch at 494 to 530 (EVNECQSNPCVNNGQCVDKVNRFQCLCPPGFTGPVCQ) folds into the EGF-like 13; calcium-binding domain. The EGF-like 14; calcium-binding domain maps to 532-568 (DIDDCSSTPCLNGAKCIDHPNGYECQCATGFTGILCD). The 36-residue stretch at 570-605 (NIDNCDPDPCHHGQCQDGIDSYTCICNPGYMGAICS) folds into the EGF-like 15; calcium-binding domain. An EGF-like 16; calcium-binding domain is found at 607–643 (QIDECYSSPCLNDGRCIDLVNGYQCNCQPGTSGLNCE). O-linked (Glc...) serine; alternate glycosylation is present at Ser-613. Ser-613 carries an O-linked (Xyl...) serine; alternate glycan. The EGF-like 17; calcium-binding domain occupies 645-680 (NFDDCASNPCMHGVCVDGINRYSCVCSPGFTGQRCN). An EGF-like 18; calcium-binding domain is found at 682–718 (DIDECASNPCRKGATCINDVNGFRCICPEGPHHPSCY). Positions 720–755 (QVNECLSNPCIHGNCTGGLSGYKCLCDAGWVGVNCE) constitute an EGF-like 19 domain. A glycan (N-linked (GlcNAc...) asparagine) is linked at Asn-733. Positions 757–793 (DKNECLSNPCQNGGTCNNLVNGYRCTCKKGFKGYNCQ) constitute an EGF-like 20; calcium-binding domain. The EGF-like 21; calcium-binding domain maps to 795-831 (NIDECASNPCLNQGTCFDDVSGYTCHCMLPYTGKNCQ). Residues 833-871 (VLAPCSPNPCENAAVCKEAPNFESFSCLCAPGWQGKRCT) form the EGF-like 22 domain. In terms of domain architecture, EGF-like 23; calcium-binding spans 873-909 (DVDECISKPCMNNGVCHNTQGSYVCECPPGFSGMDCE). An EGF-like 24; calcium-binding domain is found at 911-947 (DINDCLANPCQNGGSCVDHVNTFSCQCHPGFIGDKCQ). The region spanning 949–985 (DMNECLSEPCKNGGTCSDYVNSYTCTCPAGFHGVHCE) is the EGF-like 25; calcium-binding domain. The region spanning 987–1023 (NIDECTESSCFNGGTCVDGINSFSCLCPVGFTGPFCL) is the EGF-like 26; calcium-binding domain. One can recognise an EGF-like 27; calcium-binding domain in the interval 1025–1061 (DINECSSNPCLNAGTCVDGLGTYRCICPLGYTGKNCQ). EGF-like domains lie at 1063–1099 (LVNL…AYCD) and 1101–1147 (LNVS…SYCE). Asn-1102 carries an N-linked (GlcNAc...) asparagine glycan. 24 cysteine pairs are disulfide-bonded: Cys-1105–Cys-1126, Cys-1120–Cys-1135, Cys-1137–Cys-1146, Cys-1153–Cys-1164, Cys-1158–Cys-1173, Cys-1175–Cys-1184, Cys-1191–Cys-1202, Cys-1196–Cys-1211, Cys-1213–Cys-1222, Cys-1229–Cys-1241, Cys-1235–Cys-1250, Cys-1252–Cys-1261, Cys-1268–Cys-1281, Cys-1273–Cys-1290, Cys-1292–Cys-1301, Cys-1308–Cys-1319, Cys-1313–Cys-1331, Cys-1333–Cys-1346, Cys-1378–Cys-1389, Cys-1383–Cys-1400, Cys-1402–Cys-1411, Cys-1425–Cys-1448, Cys-1430–Cys-1443, and Cys-1439–Cys-1455. Positions 1149 to 1185 (QLDECASNPCQHGATCNDFIGGYRCECVPGYQGVNCE) constitute an EGF-like 30; calcium-binding domain. Residues 1187–1223 (EVDECQNQPCQNGGTCIDLVNHFKCSCPPGTRGLLCE) enclose the EGF-like 31; calcium-binding domain. The 38-residue stretch at 1225 to 1262 (NIDECAGGPHCLNGGQCVDRIGGYTCRCLPGFAGERCE) folds into the EGF-like 32; calcium-binding domain. 3 EGF-like domains span residues 1264–1302 (DINE…RHCE), 1304–1343 (FLDV…ARCQ), and 1375–1412 (ESGC…SHCE). LNR repeat units follow at residues 1425–1465 (CQSQ…PWAN), 1466–1502 (CTST…NSKT), and 1503–1544 (CKYD…NLAE). Residues 1425-1679 (CQSQYCADKA…SELESPRNAQ (255 aa)) are negative regulatory region (NRR). Asn-1465 carries an N-linked (GlcNAc...) asparagine glycan. 7 disulfide bridges follow: Cys-1466/Cys-1489, Cys-1472/Cys-1484, Cys-1480/Cys-1496, Cys-1503/Cys-1527, Cys-1509/Cys-1522, Cys-1518/Cys-1534, and Cys-1634/Cys-1641. The helical transmembrane segment at 1680 to 1700 (LLYLLAVAVVIILFFILLGVI) threads the bilayer. Topologically, residues 1701–2473 (MAKRKRKHGF…PPHSNMQVYA (773 aa)) are cytoplasmic. Thr-1718 carries the phosphothreonine modification. Residues 1755 to 1778 (GTSEHWVDDEGPQPKKAKAEDEAL) are disordered. Ser-1780 carries the post-translational modification Phosphoserine. Thr-1803 bears the Phosphothreonine mark. Ser-1805 bears the Phosphoserine mark. Phosphothreonine is present on Thr-1809. 6 ANK repeats span residues 1828 to 1872 (DGCT…SLQA), 1877 to 1906 (TGEM…DANA), 1910 to 1940 (MGRC…DLDA), 1944 to 1973 (DGTT…DVNA), 1977 to 2006 (HGKS…NRDM), and 2010 to 2039 (KEET…NRDI). A phosphoserine mark is found at Ser-1843 and Ser-1846. Phosphoserine is present on residues Ser-2071, Ser-2079, and Ser-2082. Residue Thr-2098 is modified to Phosphothreonine. 3 disordered regions span residues 2098–2117 (TPMG…PTSL), 2122–2169 (KEAK…TSSP), and 2382–2473 (VGKY…QVYA). Over residues 2099–2108 (PMGKKARRPN) the composition is skewed to basic residues. 2 stretches are compositionally biased toward polar residues: residues 2140-2151 (VQLSESSVTLSP) and 2390-2400 (SQHSYASSNAA). A compositionally biased stretch (low complexity) spans 2419–2446 (PSPESPDQWSSSSPHSASDWSDVTTSPT). The span at 2447-2456 (PGGGGGGQRG) shows a compositional bias: gly residues.

This sequence belongs to the NOTCH family. As to quaternary structure, heterodimer of a C-terminal fragment N(TM) and an N-terminal fragment N(EC) which are probably linked by disulfide bonds. Interacts with MAML1, MAML2 and MAML3 which act as transcriptional coactivators for NOTCH2. Interacts with RELA/p65. Interacts with HIF1AN. Interacts (via ANK repeats) with TCIM, the interaction inhibits the nuclear translocation of NOTCH2 N2ICD. Interacts with CUL1, RBX1, SKP1 and FBXW7 that are SCF(FBXW7) E3 ubiquitin-protein ligase complex components. Interacts with MINAR1; this interaction increases MINAR1 stability and function. Interacts with MDK; this interaction mediates a nuclear accumulation of NOTCH2 and therefore activation of NOTCH2 signaling leading to interaction between HES1 and STAT3. Interacts with MINAR2. In terms of processing, synthesized in the endoplasmic reticulum as an inactive form which is proteolytically cleaved by a furin-like convertase in the trans-Golgi network before it reaches the plasma membrane to yield an active, ligand-accessible form. Cleavage results in a C-terminal fragment N(TM) and a N-terminal fragment N(EC). Following ligand binding, it is cleaved by TNF-alpha converting enzyme (TACE) to yield a membrane-associated intermediate fragment called notch extracellular truncation (NEXT). This fragment is then cleaved by presenilin dependent gamma-secretase to release a notch-derived peptide containing the intracellular domain (NICD) from the membrane. Hydroxylated by HIF1AN. Post-translationally, can be either O-glucosylated or O-xylosylated at Ser-613 by POGLUT1. In terms of processing, phosphorylated by GSK3. GSK3-mediated phosphorylation is necessary for NOTCH2 recognition by FBXW7, ubiquitination and degradation via the ubiquitin proteasome pathway. In terms of tissue distribution, expressed in the brain, liver, kidney, neuroepithelia, somites, optic vesicles and branchial arches, but not heart.

The protein resides in the cell membrane. The protein localises to the nucleus. It localises to the cytoplasm. In terms of biological role, functions as a receptor for membrane-bound ligands Jagged-1 (JAG1), Jagged-2 (JAG2) and Delta-1 (DLL1) to regulate cell-fate determination. Upon ligand activation through the released notch intracellular domain (NICD) it forms a transcriptional activator complex with RBPJ/RBPSUH and activates genes of the enhancer of split locus. Affects the implementation of differentiation, proliferation and apoptotic programs. May play an essential role in postimplantation development, probably in some aspect of cell specification and/or differentiation. In collaboration with RELA/p65 enhances NFATc1 promoter activity and positively regulates RANKL-induced osteoclast differentiation. Positively regulates self-renewal of liver cancer cells. This is Neurogenic locus notch homolog protein 2 from Mus musculus (Mouse).